The following is an 810-amino-acid chain: DNA gyrase subunit A (810 aa).

The Topo IIA-type catalytic domain occupies 36-502 (LPDVRDGLKP…EVLKTSMSDL (467 aa)). Tyr124 (O-(5'-phospho-DNA)-tyrosine intermediate) is an active-site residue. The segment at 499–810 (MSDLMQKENI…SLVSVSKFIK (312 aa)) is C-terminal domain. Residues 529 to 535 (QGTGGKG) carry the GyrA-box motif.

It belongs to the type II topoisomerase GyrA/ParC subunit family. In terms of assembly, heterotetramer, composed of two GyrA and two GyrB chains. In the heterotetramer, GyrA contains the active site tyrosine that forms a transient covalent intermediate with DNA, while GyrB binds cofactors and catalyzes ATP hydrolysis.

The protein localises to the cytoplasm. It catalyses the reaction ATP-dependent breakage, passage and rejoining of double-stranded DNA.. A type II topoisomerase that negatively supercoils closed circular double-stranded (ds) DNA in an ATP-dependent manner to modulate DNA topology and maintain chromosomes in an underwound state. Negative supercoiling favors strand separation, and DNA replication, transcription, recombination and repair, all of which involve strand separation. Also able to catalyze the interconversion of other topological isomers of dsDNA rings, including catenanes and knotted rings. Type II topoisomerases break and join 2 DNA strands simultaneously in an ATP-dependent manner. In Borreliella burgdorferi (strain ATCC 35210 / DSM 4680 / CIP 102532 / B31) (Borrelia burgdorferi), this protein is DNA gyrase subunit A.